The chain runs to 254 residues: MVIANSNVIFVAGLGGIGLDTSREIVKSGPKNLVVLDRVDNPAAIAELKALNPKVTVTFYPYDVTVPLAETKKLLKTIFDKLKTVDLLINGAGILDDNQIERTIAVNFTGTVNTTTAIMDFWDKRKGGPGGVVANICSVTGFNSIYQVPVYSASKAAALSFTTSIAKLAHITGVTAYSINPGITKTVLVHKFNSWLSVEPRVAELLLEHPTQTTLQCAQNFVKAIEANQNGAIWKLDLGRLDAIEWTKHWDSGI.

Position 10–33 (10–33 (FVAGLGGIGLDTSREIVKSGPKNL)) interacts with NAD(+). S138 is a binding site for substrate. The Proton acceptor role is filled by Y151.

It belongs to the short-chain dehydrogenases/reductases (SDR) family. Homodimer.

It carries out the reaction a primary alcohol + NAD(+) = an aldehyde + NADH + H(+). It catalyses the reaction a secondary alcohol + NAD(+) = a ketone + NADH + H(+). This chain is Alcohol dehydrogenase (Adh), found in Drosophila affinidisjuncta (Fruit fly).